The following is a 146-amino-acid chain: Anti-sigma F factor (146 aa).

The protein belongs to the anti-sigma-factor family.

The enzyme catalyses L-seryl-[protein] + ATP = O-phospho-L-seryl-[protein] + ADP + H(+). It catalyses the reaction L-threonyl-[protein] + ATP = O-phospho-L-threonyl-[protein] + ADP + H(+). Binds to sigma F and blocks its ability to form an RNA polymerase holoenzyme (E-sigma F). Phosphorylates SpoIIAA on a serine residue. This phosphorylation may enable SpoIIAA to act as an anti-anti-sigma factor that counteracts SpoIIAB and thus releases sigma F from inhibition. This chain is Anti-sigma F factor, found in Shouchella clausii (strain KSM-K16) (Alkalihalobacillus clausii).